Reading from the N-terminus, the 493-residue chain is Guanosine-5'-triphosphate,3'-diphosphate pyrophosphatase (493 aa).

Belongs to the GppA/Ppx family. GppA subfamily.

It catalyses the reaction guanosine 3'-diphosphate 5'-triphosphate + H2O = guanosine 3',5'-bis(diphosphate) + phosphate + H(+). The protein operates within purine metabolism; ppGpp biosynthesis; ppGpp from GTP: step 2/2. In terms of biological role, catalyzes the conversion of pppGpp to ppGpp. Guanosine pentaphosphate (pppGpp) is a cytoplasmic signaling molecule which together with ppGpp controls the 'stringent response', an adaptive process that allows bacteria to respond to amino acid starvation, resulting in the coordinated regulation of numerous cellular activities. In Salmonella paratyphi B (strain ATCC BAA-1250 / SPB7), this protein is Guanosine-5'-triphosphate,3'-diphosphate pyrophosphatase.